The sequence spans 524 residues: MSDILPLDVIGRRVEVNGEYATVRFCGAVPPVAGLWLGVEWDNPERGKHDGSHEGTMYFKCRHPTGGSFVRPSKVNFGDDFLTALKKRYVLEDGPDDDENSCSLKVGSKQVQTIGFEHITKKQSQLRALQDISLWNCAVSHAGEQGRIAEACPNIRVVNLSKNLLSTWDEVVLIAEQLKDLEALDLSENKLQFPSDSPTLTRTFSTLKTLVLNKTGITWTEVLHCAPSWPVLEELYLKSNNISISERPVNVLQKMRLLDLSSNPSIDESQLSLIADLPRLEHLVLSDIGLSSIHFPDAEIGCKTSMFPALKYLIVNDNQISEWSFINELDKLQSLQALSCTRNPLSKADKAEEIIIAKIAQLRTLNRCQILPEERRGAELDYRKAFGNEWRKAGGHPDPDKNRPNAAFLSAHPRYQLLCCKYGAPEDEELKTQQPFMLKKQLLTLKIKCSNQPERQILEKQLPDSMTVQKVKGLLSRLLKVPVSELLLSYESSKMPGREIELENDLQPLQFYSVENGDCLLVRW.

The residue at position 2 (Ser-2) is an N-acetylserine. The CAP-Gly domain occupies 27–71 (GAVPPVAGLWLGVEWDNPERGKHDGSHEGTMYFKCRHPTGGSFVR). 7 LRR repeats span residues 154–175 (NIRV…VLIA), 180–201 (DLEA…PTLT), 206–227 (TLKT…HCAP), 231–253 (VLEE…NVLQ), 254–275 (KMRL…SLIA), 279–300 (RLEH…DAEI), and 309–330 (ALKY…NELD). The 39-residue stretch at 343 to 381 (NPLSKADKAEEIIIAKIAQLRTLNRCQILPEERRGAELD) folds into the LRRCT domain. Lys-460 is modified (N6-acetyllysine). Phosphoserine is present on Ser-492.

The protein belongs to the TBCE family. Supercomplex made of cofactors A to E. Cofactors A and D function by capturing and stabilizing tubulin in a quasi-native conformation. Cofactor E binds to the cofactor D-tubulin complex; interaction with cofactor C then causes the release of tubulin polypeptides that are committed to the native state. Cofactors B and E can form a heterodimer which binds to alpha-tubulin and enhances their ability to dissociate tubulin heterodimers. Interacts with TBCD. Ubiquitously expressed.

It is found in the cytoplasm. The protein resides in the cytoskeleton. Tubulin-folding protein; involved in the second step of the tubulin folding pathway and in the regulation of tubulin heterodimer dissociation. Required for correct organization of microtubule cytoskeleton and mitotic splindle, and maintenance of the neuronal microtubule network. This chain is Tubulin-specific chaperone E (Tbce), found in Mus musculus (Mouse).